The following is a 623-amino-acid chain: Low affinity potassium transport system protein Kup (623 aa).

12 consecutive transmembrane segments (helical) span residues 10–30, 47–67, 102–122, 138–158, 166–186, 214–234, 248–268, 277–297, 338–358, 364–384, 396–416, and 420–440; these read LSAV…TSPL, PDVV…IVSV, ILVI…VITP, PALD…LFVI, VGKL…LLGL, VSFF…ALYA, WFTV…ALLL, PFFL…ATLA, IYIP…IVGF, LAAA…VLFC, FFVY…FSAN, and LFSG…IMTT.

This sequence belongs to the HAK/KUP transporter (TC 2.A.72) family.

Its subcellular location is the cell inner membrane. The enzyme catalyses K(+)(in) + H(+)(in) = K(+)(out) + H(+)(out). Responsible for the low-affinity transport of potassium into the cell. Likely operates as a K(+):H(+) symporter. This Yersinia enterocolitica serotype O:8 / biotype 1B (strain NCTC 13174 / 8081) protein is Low affinity potassium transport system protein Kup.